A 267-amino-acid chain; its full sequence is Tryptophan synthase alpha chain (267 aa).

Catalysis depends on proton acceptor residues glutamate 47 and aspartate 58.

This sequence belongs to the TrpA family. As to quaternary structure, tetramer of two alpha and two beta chains.

It carries out the reaction (1S,2R)-1-C-(indol-3-yl)glycerol 3-phosphate + L-serine = D-glyceraldehyde 3-phosphate + L-tryptophan + H2O. The protein operates within amino-acid biosynthesis; L-tryptophan biosynthesis; L-tryptophan from chorismate: step 5/5. Its function is as follows. The alpha subunit is responsible for the aldol cleavage of indoleglycerol phosphate to indole and glyceraldehyde 3-phosphate. The chain is Tryptophan synthase alpha chain from Pelodictyon phaeoclathratiforme (strain DSM 5477 / BU-1).